The sequence spans 152 residues: Methylglyoxal synthase (152 aa).

The MGS-like domain occupies 5–152 (TRTVQAQKHI…YQLYLQQRLK (148 aa)). Residues His-19, Lys-23, 45-48 (TGTT), and 65-66 (SG) contribute to the substrate site. The Proton donor/acceptor role is filled by Asp-71. Substrate is bound at residue His-98.

This sequence belongs to the methylglyoxal synthase family.

It carries out the reaction dihydroxyacetone phosphate = methylglyoxal + phosphate. Functionally, catalyzes the formation of methylglyoxal from dihydroxyacetone phosphate. This Erwinia tasmaniensis (strain DSM 17950 / CFBP 7177 / CIP 109463 / NCPPB 4357 / Et1/99) protein is Methylglyoxal synthase.